A 444-amino-acid polypeptide reads, in one-letter code: Probable glycine dehydrogenase (decarboxylating) subunit 1 (444 aa).

It belongs to the GcvP family. N-terminal subunit subfamily. As to quaternary structure, the glycine cleavage system is composed of four proteins: P, T, L and H. In this organism, the P 'protein' is a heterodimer of two subunits.

It catalyses the reaction N(6)-[(R)-lipoyl]-L-lysyl-[glycine-cleavage complex H protein] + glycine + H(+) = N(6)-[(R)-S(8)-aminomethyldihydrolipoyl]-L-lysyl-[glycine-cleavage complex H protein] + CO2. In terms of biological role, the glycine cleavage system catalyzes the degradation of glycine. The P protein binds the alpha-amino group of glycine through its pyridoxal phosphate cofactor; CO(2) is released and the remaining methylamine moiety is then transferred to the lipoamide cofactor of the H protein. The polypeptide is Probable glycine dehydrogenase (decarboxylating) subunit 1 (Chlorobaculum parvum (strain DSM 263 / NCIMB 8327) (Chlorobium vibrioforme subsp. thiosulfatophilum)).